Consider the following 903-residue polypeptide: uncharacterized protein (903 aa).

This is an uncharacterized protein from Gallid herpesvirus 2 (strain Chicken/Md5/ATCC VR-987) (GaHV-2).